Here is a 615-residue protein sequence, read N- to C-terminus: Vitamin B12 transporter BtuB (615 aa).

The first 20 residues, 1–20 (MIKKVSLMTALSVTAFSGWA), serve as a signal peptide directing secretion. The short motif at 25 to 32 (DSLVVTAN) is the TonB box element. Residues 37–151 (PANTVLAPTS…IGGVVNIITT (115 aa)) enclose the TBDR plug domain. Cyanocob(III)alamin contacts are provided by residues serine 84, asparagine 91, and 109–110 (VT). The TBDR beta-barrel domain occupies 154–615 (KDGTTLNAGV…EYTLSGSYTF (462 aa)). 3 consecutive transmembrane segments (beta stranded) span residues 157 to 164 (TTLNAGVG), 168 to 177 (YQNYGGSTQQ), and 183 to 194 (TRVTLAGDYTYT). Ca(2+)-binding residues include aspartate 198, glutamine 210, aspartate 212, and aspartate 214. The next 2 membrane-spanning stretches (beta stranded) occupy residues 216 to 226 (YMNKTIYGALE) and 231 to 247 (DQWS…NRTA). Tyrosine 248 and aspartate 249 together coordinate Ca(2+). Position 250 (alanine 250) interacts with cyanocob(III)alamin. Residue aspartate 262 participates in Ca(2+) binding. 17 consecutive transmembrane segments (beta stranded) span residues 264–278 (RQLY…LRFN), 280–297 (GIFH…KDYN), 310–326 (TLDE…NSVD), 329–338 (HGNVGAGVDW), 354–370 (TNLR…QKFG), 372–382 (FTLEGAARSDD), 386–401 (FGRH…WEFI), 404–418 (YRFI…KAPN), 435–444 (ESKQWEGAFE), 450–459 (VSWRVSAYRN), 474–491 (YYNV…TASF), 495–510 (PLTH…ARNA), 518–530 (RRAK…QLDT), 536–551 (DWSL…YDTD), 559–573 (KVKM…LAVS), 586–597 (IANLFDKDYETV), and 603–615 (AGRE…SYTF). Threonine 310 contributes to the cyanocob(III)alamin binding site. Cyanocob(III)alamin is bound at residue arginine 518. Positions 598-615 (YGYETAGREYTLSGSYTF) match the TonB C-terminal box motif.

Belongs to the TonB-dependent receptor family. BtuB (TC 1.B.14.3.1) subfamily.

It is found in the cell outer membrane. In terms of biological role, involved in the active translocation of vitamin B12 (cyanocobalamin) across the outer membrane to the periplasmic space. It derives its energy for transport by interacting with the trans-periplasmic membrane protein TonB. The polypeptide is Vitamin B12 transporter BtuB (Enterobacter sp. (strain 638)).